The chain runs to 208 residues: MAQETNHSQVPMLCSTGCGFYGNPRTNGMCSVCYKEHLQRQNSSNGRISPPAPSVTSLSESLPVQCTDGSVPEAQSALDSTASSVQPSPVSNQSLLSESVASSQVDSTSVDKAIPETEDLQASVSETAQQASEEQSKSLEKPKQKKNRCFMCRKKVGLTGFECRCGNVYCGVHRYSDVHNCSYNYKADAAEKIRKENPVVVGEKIQKI.

The A20-type zinc-finger motif lies at 8–42 (SQVPMLCSTGCGFYGNPRTNGMCSVCYKEHLQRQN). Zn(2+)-binding residues include C14, C18, C30, and C33. Residues 41-110 (QNSSNGRISP…ASSQVDSTSV (70 aa)) are disordered. S49 carries the post-translational modification Phosphoserine. Residues 54 to 68 (SVTSLSESLPVQCTD) show a composition bias toward polar residues. The segment covering 83–94 (SSVQPSPVSNQS) has biased composition (low complexity). Residues 95–110 (LLSESVASSQVDSTSV) are compositionally biased toward polar residues. The segment at 143-189 (KQKKNRCFMCRKKVGLTGFECRCGNVYCGVHRYSDVHNCSYNYKADA) adopts an AN1-type zinc-finger fold. Positions 149, 152, 163, 165, 170, 173, 179, and 181 each coordinate Zn(2+). K204 is modified (N6-acetyllysine).

Interacts with PKN1.

The sequence is that of AN1-type zinc finger protein 6 (ZFAND6) from Bos taurus (Bovine).